Reading from the N-terminus, the 260-residue chain is Triosephosphate isomerase (260 aa).

Substrate is bound at residue 11–13 (NWK). His103 functions as the Electrophile in the catalytic mechanism. Glu175 (proton acceptor) is an active-site residue. Residues Gly181, Ser220, and 241–242 (GG) each bind substrate.

It belongs to the triosephosphate isomerase family. In terms of assembly, homodimer.

It localises to the cytoplasm. The enzyme catalyses D-glyceraldehyde 3-phosphate = dihydroxyacetone phosphate. It functions in the pathway carbohydrate biosynthesis; gluconeogenesis. It participates in carbohydrate degradation; glycolysis; D-glyceraldehyde 3-phosphate from glycerone phosphate: step 1/1. Functionally, involved in the gluconeogenesis. Catalyzes stereospecifically the conversion of dihydroxyacetone phosphate (DHAP) to D-glyceraldehyde-3-phosphate (G3P). This chain is Triosephosphate isomerase, found in Shewanella piezotolerans (strain WP3 / JCM 13877).